The primary structure comprises 143 residues: Transcriptional regulator MraZ (143 aa).

2 SpoVT-AbrB domains span residues 5 to 47 (TYTP…PREE) and 76 to 119 (ADEQ…DAAA).

It belongs to the MraZ family. Forms oligomers.

The protein resides in the cytoplasm. Its subcellular location is the nucleoid. The chain is Transcriptional regulator MraZ from Corynebacterium diphtheriae (strain ATCC 700971 / NCTC 13129 / Biotype gravis).